The following is a 416-amino-acid chain: Formyl-CoA:oxalate CoA-transferase (416 aa).

Residues 17 to 18 (QS), arginine 38, 72 to 75 (LNTK), 96 to 98 (NFH), histidine 104, and 137 to 140 (KAYE) contribute to the CoA site. Aspartate 169 (nucleophile) is an active-site residue. 248-250 (GGQ) serves as a coordination point for substrate. Position 273-275 (273-275 (QEQ)) interacts with CoA.

It belongs to the CoA-transferase III family. Frc subfamily. Homodimer.

The enzyme catalyses formyl-CoA + oxalate = oxalyl-CoA + formate. The protein operates within metabolic intermediate degradation; oxalate degradation; CO(2) and formate from oxalate: step 1/2. In terms of biological role, involved in the catabolism of oxalate and in the adapatation to low pH via the induction of the oxalate-dependent acid tolerance response (ATR). Catalyzes the transfer of the CoA moiety from formyl-CoA to oxalate. The protein is Formyl-CoA:oxalate CoA-transferase of Escherichia coli (strain ATCC 8739 / DSM 1576 / NBRC 3972 / NCIMB 8545 / WDCM 00012 / Crooks).